The chain runs to 81 residues: Large ribosomal subunit protein bL27 (81 aa).

The span at 1–11 shows a compositional bias: polar residues; the sequence is MATSKSGGSSK. A disordered region spans residues 1 to 23; it reads MATSKSGGSSKNGRDSISKRLGV.

It belongs to the bacterial ribosomal protein bL27 family.

This Borrelia garinii subsp. bavariensis (strain ATCC BAA-2496 / DSM 23469 / PBi) (Borreliella bavariensis) protein is Large ribosomal subunit protein bL27.